The primary structure comprises 489 residues: Ketol-acid reductoisomerase (NADP(+)) (489 aa).

Positions 16-207 constitute a KARI N-terminal Rossmann domain; the sequence is LRKCKLVEKN…GSHRAGVLHS (192 aa). NADP(+) is bound by residues 44-47, arginine 67, serine 77, and 107-109; these read CGSQ and DKQ. Residue histidine 131 is part of the active site. Residue glycine 157 participates in NADP(+) binding. 2 consecutive KARI C-terminal knotted domains span residues 208–343 and 344–483; these read SFIA…KCKI and CHKE…MVDM. 4 residues coordinate Mg(2+): aspartate 216, glutamate 220, glutamate 388, and glutamate 392. A substrate-binding site is contributed by serine 413.

Belongs to the ketol-acid reductoisomerase family. The cofactor is Mg(2+).

It catalyses the reaction (2R)-2,3-dihydroxy-3-methylbutanoate + NADP(+) = (2S)-2-acetolactate + NADPH + H(+). The catalysed reaction is (2R,3R)-2,3-dihydroxy-3-methylpentanoate + NADP(+) = (S)-2-ethyl-2-hydroxy-3-oxobutanoate + NADPH + H(+). Its pathway is amino-acid biosynthesis; L-isoleucine biosynthesis; L-isoleucine from 2-oxobutanoate: step 2/4. It functions in the pathway amino-acid biosynthesis; L-valine biosynthesis; L-valine from pyruvate: step 2/4. In terms of biological role, involved in the biosynthesis of branched-chain amino acids (BCAA). Catalyzes an alkyl-migration followed by a ketol-acid reduction of (S)-2-acetolactate (S2AL) to yield (R)-2,3-dihydroxy-isovalerate. In the isomerase reaction, S2AL is rearranged via a Mg-dependent methyl migration to produce 3-hydroxy-3-methyl-2-ketobutyrate (HMKB). In the reductase reaction, this 2-ketoacid undergoes a metal-dependent reduction by NADPH to yield (R)-2,3-dihydroxy-isovalerate. This Buchnera aphidicola subsp. Schlechtendalia chinensis protein is Ketol-acid reductoisomerase (NADP(+)).